The chain runs to 218 residues: Hypoxanthine-guanine phosphoribosyltransferase (218 aa).

Ala2 carries the N-acetylalanine modification. Residue Lys69 participates in GMP binding. Lys103 is modified (N6-acetyllysine). A Glycyl lysine isopeptide (Lys-Gly) (interchain with G-Cter in SUMO1); alternate cross-link involves residue Lys115. Lys115 is covalently cross-linked (Glycyl lysine isopeptide (Lys-Gly) (interchain with G-Cter in SUMO2); alternate). Residues 134–142 (EDIIDTGKT), Lys166, 186–188 (KFV), and Asp194 each bind GMP. Asp138 functions as the Proton acceptor in the catalytic mechanism. The residue at position 142 (Thr142) is a Phosphothreonine. Asp194 serves as a coordination point for Mg(2+).

It belongs to the purine/pyrimidine phosphoribosyltransferase family. As to quaternary structure, homotetramer. It depends on Mg(2+) as a cofactor.

It is found in the cytoplasm. The enzyme catalyses IMP + diphosphate = hypoxanthine + 5-phospho-alpha-D-ribose 1-diphosphate. It catalyses the reaction GMP + diphosphate = guanine + 5-phospho-alpha-D-ribose 1-diphosphate. It functions in the pathway purine metabolism; IMP biosynthesis via salvage pathway; IMP from hypoxanthine: step 1/1. Converts guanine to guanosine monophosphate, and hypoxanthine to inosine monophosphate. Transfers the 5-phosphoribosyl group from 5-phosphoribosylpyrophosphate onto the purine. Plays a central role in the generation of purine nucleotides through the purine salvage pathway. This chain is Hypoxanthine-guanine phosphoribosyltransferase (HPRT1), found in Homo sapiens (Human).